A 196-amino-acid chain; its full sequence is UPF0316 protein LBL_2483 (196 aa).

The next 3 membrane-spanning stretches (helical) occupy residues 12-32 (YCVLPCFIFLARVTDVSIGTI), 44-64 (IAASLGFLEVLLWVIVITQVI), and 70-90 (ALCYLAYAGGFAAGTFIGMIL).

The protein belongs to the UPF0316 family.

The protein resides in the cell membrane. The protein is UPF0316 protein LBL_2483 of Leptospira borgpetersenii serovar Hardjo-bovis (strain L550).